A 197-amino-acid chain; its full sequence is ADP-ribosylation factor-like protein 16 (197 aa).

Residues 30–37, 82–86, and 139–142 contribute to the GTP site; these read GATGVGKT, ELGGC, and NKID.

This sequence belongs to the small GTPase superfamily. Arf family. In terms of assembly, interacts with RIGI; this interaction is GTP-dependent and induced upon viral infection; this interaction suppresses the RNA sensing activity of RIGI.

It localises to the cytoplasm. Functionally, may suppress the RNA sensing activity of RIGI in a GTP-dependent. This chain is ADP-ribosylation factor-like protein 16, found in Homo sapiens (Human).